The following is a 209-amino-acid chain: MELNSLLILLEAAEYLERRDREAEHGYASVLPFDGDFAREKTKAAGLVRKAPNNRSSHNELEKHRRAKLRLYLEQLKQLVPLGPDSTRHTTLSLLKRAKVHIKKLEEQDRRALSIKEQLQQEHRFLKRRLEQLSVQSVERVRTDSTGSAVSTDDSEQEVDIEGMEFGPGELDSVGSSSDADDHYSLQSGTGGDSGFGPHCRRLGRPALS.

Residues 6–23 (LLILLEAAEYLERRDREA) are interaction with SIN3A and SIN3B. Residues 53–105 (NNRSSHNELEKHRRAKLRLYLEQLKQLVPLGPDSTRHTTLSLLKRAKVHIKKL) form the bHLH domain. The disordered stretch occupies residues 140–209 (RVRTDSTGSA…CRRLGRPALS (70 aa)). A compositionally biased stretch (acidic residues) spans 153 to 163 (DDSEQEVDIEG). Positions 199-209 (HCRRLGRPALS) are enriched in basic residues.

Efficient DNA binding requires dimerization with another bHLH protein. Binds DNA as a heterodimer with MAX. Interacts with SIN3A AND SIN3B. Interacts with RNF17.

It localises to the nucleus. In terms of biological role, transcriptional repressor. Binds with MAX to form a sequence-specific DNA-binding protein complex which recognizes the core sequence 5'-CAC[GA]TG-3'. Antagonizes MYC transcriptional activity by competing for MAX and suppresses MYC dependent cell transformation. The chain is Max dimerization protein 4 (MXD4) from Homo sapiens (Human).